We begin with the raw amino-acid sequence, 526 residues long: Fluoride export protein 1 (526 aa).

Disordered stretches follow at residues 1-73 and 90-149; these read MMTA…RRAS and ASNI…KQAG. The Cytoplasmic portion of the chain corresponds to 1–159; the sequence is MMTAPSDTEG…VVAKRQKVSR (159 aa). Basic and acidic residues-rich tracts occupy residues 21 to 36 and 103 to 123; these read SPDR…DHNH and PITR…YLRE. Residues 160-180 traverse the membrane as a helical segment; it reads LATELYTISYLIFFSLLGTLA. Over 181–194 the chain is Extracellular; sequence RLGLQALTSAYPQS. The helical transmembrane segment at 195–215 threads the bilayer; that stretch reads PIIFPSIWPNFAGCVVMGFLA. Over 216–260 the chain is Cytoplasmic; that stretch reads EDRMLFRPDWGQQQPNPKKDDDDDEEAKDIDPAAAKKAHMALKKT. The disordered stretch occupies residues 223 to 242; the sequence is PDWGQQQPNPKKDDDDDEEA. A helical membrane pass occupies residues 261–281; the sequence is IPLYVGLATGFCGSFTSFSSF. The Extracellular segment spans residues 282-310; it reads IRDIYLALSNDLAAHGSSAAPVSRNGGYS. A helical transmembrane segment spans residues 311–331; sequence FMALLAVTITTISLSLSGLFA. Over 332-361 the chain is Cytoplasmic; the sequence is GAHLAIAIATLFTRFDLGLPYTFVSRILDR. A helical transmembrane segment spans residues 362–382; that stretch reads LIVLLGFGCWLGAVLLSIWPP. Residues 383 to 398 are Extracellular-facing; sequence DRHSAQPEKERWRGTA. The helical transmembrane segment at 399–419 threads the bilayer; the sequence is TFALVFAPLGCLTRFYASAHL. Over 420–424 the chain is Cytoplasmic; it reads NGRLP. A helical membrane pass occupies residues 425 to 445; that stretch reads SFPLGTFVVNMLGTAVLGMAW. The Extracellular segment spans residues 446–452; sequence DLNHVPS. The chain crosses the membrane as a helical span at residues 453-473; it reads LGGVVGCQVLQGVADGFCGCL. Residues 474–492 are Cytoplasmic-facing; it reads TTVSTWVSELAALRRRHAY. Residues 493 to 513 form a helical membrane-spanning segment; the sequence is VYGGASVGGGLALMVVVMGSL. Topologically, residues 514–526 are extracellular; it reads RWTEGFGEVKCIS.

Belongs to the fluoride channel Fluc/FEX (TC 1.A.43) family.

The protein resides in the cell membrane. The enzyme catalyses fluoride(in) = fluoride(out). Fluoride channel required for the rapid expulsion of cytoplasmic fluoride. In Neurospora crassa (strain ATCC 24698 / 74-OR23-1A / CBS 708.71 / DSM 1257 / FGSC 987), this protein is Fluoride export protein 1.